The following is a 63-amino-acid chain: Insect toxin TbIT-1 (63 aa).

The LCN-type CS-alpha/beta domain occupies 2–63 (KEGYPVDSRG…VYDNASNKCB (62 aa)). 4 disulfide bridges follow: Cys-12–Cys-62, Cys-16–Cys-38, Cys-24–Cys-43, and Cys-28–Cys-45.

The protein belongs to the long (4 C-C) scorpion toxin superfamily. Sodium channel inhibitor family. Beta subfamily. Expressed by the venom gland.

The protein localises to the secreted. Beta toxins bind voltage-independently at site-4 of sodium channels (Nav) and shift the voltage of activation toward more negative potentials thereby affecting sodium channel activation and promoting spontaneous and repetitive firing. This toxin is only active against insects. The sequence is that of Insect toxin TbIT-1 from Tityus bahiensis (Brazilian scorpion).